We begin with the raw amino-acid sequence, 418 residues long: L-glutamine:2-deoxy-scyllo-inosose aminotransferase (418 aa).

Lys-192 is subject to N6-(pyridoxal phosphate)lysine.

Belongs to the DegT/DnrJ/EryC1 family. L-glutamine:2-deoxy-scyllo-inosose/scyllo-inosose aminotransferase subfamily. Pyridoxal 5'-phosphate serves as cofactor.

The enzyme catalyses 2-deoxy-L-scyllo-inosose + L-glutamine = 2-deoxy-scyllo-inosamine + 2-oxoglutaramate. It carries out the reaction 3-amino-2,3-dideoxy-scyllo-inosose + L-glutamine = 2-deoxystreptamine + 2-oxoglutaramate. It participates in metabolic intermediate biosynthesis; 2-deoxystreptamine biosynthesis; 2-deoxystreptamine from D-glucose 6-phosphate: step 2/4. The protein operates within metabolic intermediate biosynthesis; 2-deoxystreptamine biosynthesis; 2-deoxystreptamine from D-glucose 6-phosphate: step 4/4. It functions in the pathway antibiotic biosynthesis; butirosin biosynthesis. Functionally, catalyzes the PLP-dependent transamination of 2-deoxy-scyllo-inosose (2-DOI) to form 2-deoxy-scyllo-inosamine (2-DOIA) using L-glutamine as the amino donor. Also catalyzes the transamination of 3-amino-2,3-dideoxy-scyllo-inosose (keto-2-DOIA) into 2-deoxystreptamine (2-DOS). This is L-glutamine:2-deoxy-scyllo-inosose aminotransferase (btrR) from Niallia circulans (Bacillus circulans).